The chain runs to 164 residues: Ecotin (164 aa).

A signal peptide spans 1-20; that stretch reads MKMFVPAVVFAALASASAWA. Cysteines 72 and 109 form a disulfide.

It belongs to the protease inhibitor I11 (ecotin) family. In terms of assembly, homodimer.

The protein localises to the periplasm. Functionally, general inhibitor of pancreatic serine proteases: inhibits chymotrypsin, trypsin, elastases, factor X, kallikrein as well as a variety of other proteases. This is Ecotin from Salmonella paratyphi A (strain ATCC 9150 / SARB42).